The sequence spans 475 residues: UDP-glycosyltransferase 101 (475 aa).

Histidine 15 acts as the Proton acceptor in catalysis. An anthocyanidin is bound at residue histidine 15. The active-site Charge relay is the aspartate 117. 7 residues coordinate UDP-alpha-D-glucose: alanine 345, glutamine 347, histidine 362, tryptophan 365, asparagine 366, serine 367, and glutamate 370. Glycine 385 provides a ligand contact to an anthocyanidin. Residues glutamate 386 and glutamine 387 each contribute to the UDP-alpha-D-glucose site.

The protein belongs to the UDP-glycosyltransferase family.

The enzyme catalyses (20S)-protopanaxadiol + UDP-alpha-D-glucose = (20S)-ginsenoside C-K + UDP + H(+). The catalysed reaction is (20S)-ginsenoside Rg3 + UDP-alpha-D-glucose = (20S)-ginsenoside Rd + UDP + H(+). It catalyses the reaction (20S)-protopanaxatriol + UDP-alpha-D-glucose = (20S)-ginsenoside F1 + UDP + H(+). It carries out the reaction (20S)-ginsenoside F1 + UDP-alpha-D-glucose = (20S)-ginsenoside Rg1 + UDP + H(+). It participates in secondary metabolite biosynthesis; terpenoid biosynthesis. Component of the dammarane-type triterpene saponins (e.g. ginsenosides or panaxosides) biosynthetic pathway. Glycosyltransferase that catalyzes the biosynthesis of ginsenoside F1 from protopanaxatriol (PPT) and the conversion of ginsenoside F1 to ginsenoside Rg1. Triggers C20-OH glycosylation of ginsenoside Rg3 to produce ginsenoside Rd. Mediates the conversion of protopanaxadiol (PPD) to the ginsenoside compound K. The protein is UDP-glycosyltransferase 101 of Panax ginseng (Korean ginseng).